The following is a 410-amino-acid chain: Translation initiation factor 2 subunit gamma (410 aa).

In terms of domain architecture, tr-type G spans 9–202; the sequence is QAEVNIGMVG…AIEEFIPTPE (194 aa). The tract at residues 18-25 is G1; the sequence is GHVDHGKT. Mg(2+) contacts are provided by Asp-21, Thr-25, Gly-46, and Thr-48. 21–26 contacts GTP; the sequence is DHGKTT. Positions 46-50 are G2; that stretch reads GITIK. 4 residues coordinate Zn(2+): Cys-61, Cys-64, Cys-73, and Cys-76. The G3 stretch occupies residues 90–93; the sequence is DAPG. GTP contacts are provided by residues 145 to 148 and 180 to 182; these read NKIE and SAL. Positions 145-148 are G4; sequence NKIE. The G5 stretch occupies residues 180-182; the sequence is SAL.

Belongs to the TRAFAC class translation factor GTPase superfamily. Classic translation factor GTPase family. EIF2G subfamily. As to quaternary structure, heterotrimer composed of an alpha, a beta and a gamma chain. The cofactor is Mg(2+).

The enzyme catalyses GTP + H2O = GDP + phosphate + H(+). Functionally, eIF-2 functions in the early steps of protein synthesis by forming a ternary complex with GTP and initiator tRNA. The chain is Translation initiation factor 2 subunit gamma from Thermococcus onnurineus (strain NA1).